The chain runs to 475 residues: Ras-GEF domain-containing family member 1B-B (475 aa).

Polar residues predominate over residues 1-19 (MPQTTPYSSKFNPSAYSSS). The interval 1–25 (MPQTTPYSSKFNPSAYSSSHSHRQP) is disordered. The region spanning 36 to 166 (RDNKLVSGSL…LIQRLLRKLT (131 aa)) is the N-terminal Ras-GEF domain. In terms of domain architecture, Ras-GEF spans 209–456 (DPFIFAQQLT…QLASYESEGP (248 aa)). The segment at 452–475 (ESEGPENNLERDTRRSLRSSLSRM) is disordered.

In terms of biological role, guanine nucleotide exchange factor (GEF) for Ras family proteins. In Danio rerio (Zebrafish), this protein is Ras-GEF domain-containing family member 1B-B.